Reading from the N-terminus, the 349-residue chain is Peptide chain release factor 1 (349 aa).

At Q233 the chain carries N5-methylglutamine.

This sequence belongs to the prokaryotic/mitochondrial release factor family. Post-translationally, methylated by PrmC. Methylation increases the termination efficiency of RF1.

The protein localises to the cytoplasm. Peptide chain release factor 1 directs the termination of translation in response to the peptide chain termination codons UAG and UAA. This Pelotomaculum thermopropionicum (strain DSM 13744 / JCM 10971 / SI) protein is Peptide chain release factor 1.